We begin with the raw amino-acid sequence, 89 residues long: Small ribosomal subunit protein uS15 (89 aa).

This sequence belongs to the universal ribosomal protein uS15 family. In terms of assembly, part of the 30S ribosomal subunit. Forms a bridge to the 50S subunit in the 70S ribosome, contacting the 23S rRNA.

Functionally, one of the primary rRNA binding proteins, it binds directly to 16S rRNA where it helps nucleate assembly of the platform of the 30S subunit by binding and bridging several RNA helices of the 16S rRNA. In terms of biological role, forms an intersubunit bridge (bridge B4) with the 23S rRNA of the 50S subunit in the ribosome. The chain is Small ribosomal subunit protein uS15 from Anaeromyxobacter dehalogenans (strain 2CP-1 / ATCC BAA-258).